The following is a 250-amino-acid chain: Thiamine thiazole synthase (250 aa).

NAD(+)-binding positions include Ser36, 55 to 56 (EE), Gly63, Val126, and 152 to 154 (HVD). Asp154 and His169 together coordinate Fe cation. Met216 contributes to the NAD(+) binding site. Arg226 contributes to the glycine binding site.

The protein belongs to the THI4 family. Homooctamer; tetramer of dimers. Fe(2+) serves as cofactor.

The enzyme catalyses hydrogen sulfide + glycine + NAD(+) = ADP-5-ethyl-4-methylthiazole-2-carboxylate + nicotinamide + 3 H2O + H(+). Its pathway is cofactor biosynthesis; thiamine diphosphate biosynthesis. Its function is as follows. Involved in the biosynthesis of the thiazole moiety of thiamine. Catalyzes the conversion of NAD and glycine to adenosine diphosphate 5-(2-hydroxyethyl)-4-methylthiazole-2-carboxylate (ADT), an adenylated thiazole intermediate, using free sulfide as a source of sulfur. This is Thiamine thiazole synthase from Thermotoga maritima (strain ATCC 43589 / DSM 3109 / JCM 10099 / NBRC 100826 / MSB8).